We begin with the raw amino-acid sequence, 111 residues long: Holo-[acyl-carrier-protein] synthase (111 aa).

Asp-8 and Glu-57 together coordinate Mg(2+).

The protein belongs to the P-Pant transferase superfamily. AcpS family. It depends on Mg(2+) as a cofactor.

The protein localises to the cytoplasm. It catalyses the reaction apo-[ACP] + CoA = holo-[ACP] + adenosine 3',5'-bisphosphate + H(+). Transfers the 4'-phosphopantetheine moiety from coenzyme A to a Ser of acyl-carrier-protein. The polypeptide is Holo-[acyl-carrier-protein] synthase (Mycoplasmoides gallisepticum (strain R(low / passage 15 / clone 2)) (Mycoplasma gallisepticum)).